The sequence spans 171 residues: Co-chaperone protein HscB (171 aa).

A J domain is found at 2–74 (DYFTLFGLPA…LTRAEYLLSL (73 aa)).

The protein belongs to the HscB family. In terms of assembly, interacts with HscA and stimulates its ATPase activity. Interacts with IscU.

In terms of biological role, co-chaperone involved in the maturation of iron-sulfur cluster-containing proteins. Seems to help targeting proteins to be folded toward HscA. The polypeptide is Co-chaperone protein HscB (Salmonella typhimurium (strain LT2 / SGSC1412 / ATCC 700720)).